The following is a 2919-amino-acid chain: RNA-directed RNA polymerase L (2919 aa).

The tract at residues serine 86–threonine 675 is endonuclease. 3 residues coordinate Mn(2+): histidine 535, aspartate 567, and glutamate 585. Lysine 604 (for endonuclease activity) is an active-site residue. The region spanning alanine 1472 to glycine 1671 is the RdRp catalytic domain. Aspartate 1636 is a binding site for Mg(2+). The cap-binding stretch occupies residues arginine 2494–threonine 2632.

The protein belongs to the Bunyavirales RNA polymerase family. In terms of assembly, homomultimer. Interacts with glycoprotein N; this interaction allows efficient polymerase packaging into virus particles. Interacts with nucleoprotein N. Requires Mn(2+) as cofactor. The cofactor is Mg(2+).

The protein resides in the host Golgi apparatus. It is found in the host endoplasmic reticulum. The protein localises to the host endoplasmic reticulum-Golgi intermediate compartment. It localises to the virion. It carries out the reaction RNA(n) + a ribonucleoside 5'-triphosphate = RNA(n+1) + diphosphate. Its function is as follows. RNA-dependent RNA polymerase, which is responsible for the replication and transcription of the viral RNA genome using antigenomic RNA as an intermediate. During transcription, synthesizes subgenomic RNAs and assures their capping by a cap-snatching mechanism, which involves the endonuclease activity cleaving the host capped pre-mRNAs. These short capped RNAs are then used as primers for viral transcription. The 3'-end of subgenomic mRNAs molecules are not polyadenylated. During replication, the polymerase binds the 5' and 3' vRNA extremities at distinct sites. In turn, significant conformational changes occur in the polymerase and in vRNA to initiate active RNA synthesis. As a consequence of the use of the same enzyme for both transcription and replication, these mechanisms need to be well coordinated. The sequence is that of RNA-directed RNA polymerase L from Avena sativa (Oat).